A 364-amino-acid polypeptide reads, in one-letter code: MKNIFLHSLTLENYRNFKNLELKTDNTPIILIGENGSGKTNILEAISLFYPGRGLRSAKLADICKASEDQCLVKALLQSKLGLAEFTTQFKRSSNRRITEYNESKIANNELSKFTSMVWLTPQMEGIFTSGSSDRRKFLDRIVYNFDSKHAELVSKYEYYMYERNKILAEDIRDDNWLKIIEEKMADMSSHIANNRLKTLEFMQQAIDELENEFPKADLSIDGIVEQKILDGKENIVNFITAELYQTRSKDKLLGRTSFGVHKSDFLVKHQKKNILAKFCSTGEQKAILIAIILAEMNYAIKLTKIAPILLLDEVFVHLDDKRRGYLIEFFTGLNMQLWVTATDLEGIENFANKAQLIKLPIIL.

33 to 40 contributes to the ATP binding site; that stretch reads GENGSGKT.

The protein belongs to the RecF family.

It localises to the cytoplasm. Functionally, the RecF protein is involved in DNA metabolism; it is required for DNA replication and normal SOS inducibility. RecF binds preferentially to single-stranded, linear DNA. It also seems to bind ATP. The sequence is that of DNA replication and repair protein RecF from Rickettsia felis (strain ATCC VR-1525 / URRWXCal2) (Rickettsia azadi).